The chain runs to 700 residues: UvrABC system protein C (700 aa).

A GIY-YIG domain is found at 11-90; sequence TTPGVYLYKD…IKKHRPRYNI (80 aa). Positions 200–235 constitute a UVR domain; sequence TELIDMLRADMQAASDALEFEEAALLRDQLQAVERT.

The protein belongs to the UvrC family. As to quaternary structure, interacts with UvrB in an incision complex.

The protein localises to the cytoplasm. Its function is as follows. The UvrABC repair system catalyzes the recognition and processing of DNA lesions. UvrC both incises the 5' and 3' sides of the lesion. The N-terminal half is responsible for the 3' incision and the C-terminal half is responsible for the 5' incision. The protein is UvrABC system protein C of Oleidesulfovibrio alaskensis (strain ATCC BAA-1058 / DSM 17464 / G20) (Desulfovibrio alaskensis).